The chain runs to 250 residues: MADNFSLHDALSGSGNPNPQGWPGAWGNQPAGAGGYPGASYPGAYPGQAPPGAYPGQAPPGAYPGAPGAYPGAPAPGVYPGPPSGPGAYPSSGQPSATGAYPATGPYGAPAGPLIVPYNLPLPGGVVPRMLITILGTVKPNANRIALDFQRGNDVAFHFNPRFNENNRRVIVCNTKLDNNWGREERQSVFPFESGKPFKIQVLVEPDHFKVAVNDAHLLQYNHRVKKLNEISKLGISGDIDLTSASYTMI.

Residues 1 to 60 form a disordered region; that stretch reads MADNFSLHDALSGSGNPNPQGWPGAWGNQPAGAGGYPGASYPGAYPGQAPPGAYPGQAPP. The residue at position 2 (Ala2) is an N-acetylalanine. A phosphoserine mark is found at Ser6 and Ser12. 3 repeat units span residues 36-44, 45-53, and 54-62. An 8 X 9 AA tandem repeats of Y-P-G-X(3)-P-G-A region spans residues 36 to 109; that stretch reads YPGASYPGAY…AYPATGPYGA (74 aa). A compositionally biased stretch (low complexity) spans 38–47; that stretch reads GASYPGAYPG. Over residues 48-60 the composition is skewed to pro residues; it reads QAPPGAYPGQAPP. A 4; approximate repeat occupies 63–69; sequence YPGAPGA. Copy 5 of the repeat occupies 70–78; the sequence is YPGAPAPGV. The 6; approximate repeat unit spans residues 79-88; it reads YPGPPSGPGA. The stretch at 89 to 100 is one 7; approximate repeat; it reads YPSSGQPSATGA. An 8; approximate repeat occupies 101–109; that stretch reads YPATGPYGA. The 131-residue stretch at 118–248 folds into the Galectin domain; that stretch reads YNLPLPGGVV…DIDLTSASYT (131 aa). 181 to 187 provides a ligand contact to a beta-D-galactoside; it reads WGREERQ. Ser188 bears the Phosphoserine mark. A Nuclear export signal motif is present at residues 226-241; that stretch reads KKLNEISKLGISGDID.

Probably forms homo- or heterodimers. Interacts with DMBT1. Interacts with CD6 and ALCAM. Forms a complex with the ITGA3, ITGB1 and CSPG4. Interacts with LGALS3BP, LYPD3, ZFTRAF1 and UACA. Interacts with TRIM16; this interaction mediates autophagy of damage endomembranes. Interacts with cargo receptor TMED10; the interaction mediates the translocation from the cytoplasm into the ERGIC (endoplasmic reticulum-Golgi intermediate compartment) and thereby secretion. A major expression is found in the colonic epithelium. It is also abundant in the activated macrophages. Expressed in fetal membranes.

The protein localises to the cytoplasm. Its subcellular location is the nucleus. It is found in the secreted. Functionally, galactose-specific lectin which binds IgE. May mediate with the alpha-3, beta-1 integrin the stimulation by CSPG4 of endothelial cells migration. Together with DMBT1, required for terminal differentiation of columnar epithelial cells during early embryogenesis. In the nucleus: acts as a pre-mRNA splicing factor. Involved in acute inflammatory responses including neutrophil activation and adhesion, chemoattraction of monocytes macrophages, opsonization of apoptotic neutrophils, and activation of mast cells. Together with TRIM16, coordinates the recognition of membrane damage with mobilization of the core autophagy regulators ATG16L1 and BECN1 in response to damaged endomembranes. The chain is Galectin-3 from Homo sapiens (Human).